The sequence spans 1022 residues: Sodium-dependent transporter snf-12 (1022 aa).

The Cytoplasmic portion of the chain corresponds to 1–165 (MNGEWKSALR…RRELWRTQKD (165 aa)). Residues 166–185 (FFLSCLGFMVGVGHTMRFPA) form a helical membrane-spanning segment. The Extracellular segment spans residues 186–192 (KVYQHGG). The helical transmembrane segment at 193–213 (GVFFIPYLFSLIFFGLPLVFL) threads the bilayer. Over 214 to 241 (HLSLGQYTGQAANTAFQRLMPIGSGVGW) the chain is Cytoplasmic. A helical membrane pass occupies residues 242–262 (ALVVIAIPVAVYYNIIVAWAI). The Extracellular segment spans residues 263–337 (HYFFQSAKGL…DFALGPLQSH (75 aa)). A helical membrane pass occupies residues 338-358 (LVLSLAAAWLLVFFGVFKGLG). A topological domain (cytoplasmic) is located at residue serine 359. The chain crosses the membrane as a helical span at residues 360–380 (IAQTMNVTATVPYLLLSILLL). At 381–412 (RGISLPGANKGLTFLFTVDSTKLWKWQIWKSA) the chain is on the extracellular side. The helical transmembrane segment at 413-433 (AEQVFYELGIDAGPLISMAAF) threads the bilayer. The Cytoplasmic portion of the chain corresponds to 434 to 444 (SRYRNNIYRDS). A helical transmembrane segment spans residues 445–465 (VLLVIMDALTSCLSGMVIFSF). Topologically, residues 466–498 (VGFIASESNSNVNDVLKHDPLYLSFTVYPGVTS) are extracellular. The chain crosses the membrane as a helical span at residues 499-519 (FMYWGGLWATLFFGMLVLAAI). Residues 520-550 (DAEFAWLEMIASAFMNHFSMKNKAVENRLLA) are Cytoplasmic-facing. A helical transmembrane segment spans residues 551-571 (FLCLAGFFLGLPLCAQGGIFV). Residues 572-584 (FHAIENLNANWNS) lie on the Extracellular side of the membrane. A helical transmembrane segment spans residues 585 to 605 (FSLALLSVAIVCYVYGIDNYL). At 606-641 (TDISAMLRVPRIQISKATRLKEKLIYFFGPGGIYIK) the chain is on the cytoplasmic side. Residues 642–662 (FSLCFICPVILTVLLVASVLG) traverse the membrane as a helical segment. Topologically, residues 663-677 (YQRISFAGRPIPIDY) are extracellular. The chain crosses the membrane as a helical span at residues 678–698 (EIVAWIVMIGPLLVVPLVAFM). Topologically, residues 699 to 1022 (QIRQIRNEGK…RPKPIDMPPK (324 aa)) are cytoplasmic. 2 disordered regions span residues 867-948 (RIPN…SSDD) and 995-1022 (IYDQ…MPPK). Pro residues predominate over residues 893–907 (SDPPVPTSPLPPPPK). Residues 933–943 (DDSPSISNSSD) show a composition bias toward low complexity.

Belongs to the sodium:neurotransmitter symporter (SNF) (TC 2.A.22) family. In terms of assembly, may interact with STAT family transcription factor sta-2; the interaction is probably direct.

Its subcellular location is the membrane. It localises to the cytoplasm. It is found in the vesicle. Its function is as follows. Probably mediates sodium-dependent uptake of unknown small molecule(s). By positively modulating expression, in the epidermis, of antimicrobial peptides such as nlp-29, plays a role in resistance to fungal infection and in the response to physical wounding and phorbol ester PMA treatment. Role in response to wounding of the epidermis may be facilitated by recruitment of snf-12 to the wound site by microtubule-dependent vesicle trafficking. Functions cell autonomously in the epidermis, in concert with STAT transcription factor sta-2, probably acting at vesicular membranes, downstream of a p38 MAPK/pmk-1 pathway. This chain is Sodium-dependent transporter snf-12, found in Caenorhabditis elegans.